Here is a 230-residue protein sequence, read N- to C-terminus: Small ribosomal subunit protein uS2 (230 aa).

The protein belongs to the universal ribosomal protein uS2 family.

This chain is Small ribosomal subunit protein uS2, found in Prochlorococcus marinus (strain NATL2A).